Reading from the N-terminus, the 741-residue chain is MDHVEETEILAATQRYYVERPIFSHPVLQERLHKKDKISESIGDKLKQAFTCTPKKIRNIIYMFLPITKWLPAYRFKEYVLGDIVSGISTGVLQLPQGLAFAMLAAVPPVFGLYSSFYPVIMYCFFGTSRHISIGPFAVISLMIGGVAVRLVPDDIVIPGGVNATNSTEARDALRVKVAMSVTLLTGIIQFCLGVCRFGFVAIYLTEPLVRGFTTAAAVHVFTSMLKYLFGVKTKRYSGIFSVVYSTVAVLQNVKNLNVCSLGVGLMVFGLLLGGKEFNERFKEKLPAPIPLEFFAVVMGTGISAGFSLHESYNVDVVGTLPLGLLPPANPDTSLFHLVYVDAIAIAIVGFSVTISMAKTLANKHGYQVDGNQELIALGLCNSTGSLFQTFAISCSLSRSLVQEGTGGKTQLAGCLASLMILLVILATGFLFESLPQAVLSAIVIVNLKGMFMQFSDLPFFWRTSKIELTIWLTTFVSSLFLGLDYGLITAVIIALMTVIYRTQSPSYIVLGQLPDTDVYIDIDAYEEVKEVPGIKIFQINAPIYYANSDLYSSALKRKTGVNPAFILGARRKAMKKYAKEVGNANMANATVVKVDAEVDAEDGTKPEEEEDEIKYPPIVTKSTLPEELQRFMPPGDNVHTIILDFTQVNFMDSVGVKTLAGIVKEYGDVGIYVYLAGCSAQVVSDLTQNQFFENPALLDLLFHSIHDAVLGSQVREALAEQEATAAPPQEDSEPNATPEA.

Residues 1-79 (MDHVEETEIL…WLPAYRFKEY (79 aa)) lie on the Cytoplasmic side of the membrane. A helical transmembrane segment spans residues 80–105 (VLGDIVSGISTGVLQLPQGLAFAMLA). Over 106-109 (AVPP) the chain is Extracellular. A helical transmembrane segment spans residues 110–125 (VFGLYSSFYPVIMYCF). Residues 126 to 137 (FGTSRHISIGPF) are Cytoplasmic-facing. Residues 138-147 (AVISLMIGGV) traverse the membrane as a helical segment. Topologically, residues 148–178 (AVRLVPDDIVIPGGVNATNSTEARDALRVKV) are extracellular. Residues 158-168 (IPGGVNATNST) carry the Involved in motor function motif. Asn163 and Asn166 each carry an N-linked (GlcNAc...) asparagine glycan. Helical transmembrane passes span 179 to 208 (AMSV…LTEP) and 209 to 230 (LVRG…KYLF). Over 231 to 243 (GVKTKRYSGIFSV) the chain is Extracellular. The helical intramembrane region spans 244-248 (VYSTV). Residues 249 to 261 (AVLQNVKNLNVCS) are Extracellular-facing. Residues 262–283 (LGVGLMVFGLLLGGKEFNERFK) traverse the membrane as a helical segment. The Cytoplasmic segment spans residues 284–291 (EKLPAPIP). A helical transmembrane segment spans residues 292–303 (LEFFAVVMGTGI). Topologically, residues 304–338 (SAGFSLHESYNVDVVGTLPLGLLPPANPDTSLFHL) are extracellular. Residues 339–361 (VYVDAIAIAIVGFSVTISMAKTL) traverse the membrane as a helical segment. At 362 to 370 (ANKHGYQVD) the chain is on the cytoplasmic side. A helical membrane pass occupies residues 371–388 (GNQELIALGLCNSTGSLF). Residues 389–396 (QTFAISCS) lie on the Extracellular side of the membrane. The chain crosses the membrane as a helical span at residues 397–406 (LSRSLVQEGT). Ser398 provides a ligand contact to salicylate. Over 407–410 (GGKT) the chain is Cytoplasmic. A helical transmembrane segment spans residues 411–429 (QLAGCLASLMILLVILATG). Topologically, residues 430 to 436 (FLFESLP) are extracellular. A helical transmembrane segment spans residues 437–459 (QAVLSAIVIVNLKGMFMQFSDLP). At 460 to 467 (FFWRTSKI) the chain is on the cytoplasmic side. Residues 468-483 (ELTIWLTTFVSSLFLG) form a helical membrane-spanning segment. A topological domain (extracellular) is located at residue Leu484. A helical membrane pass occupies residues 485-498 (DYGLITAVIIALMT). At 499–741 (VIYRTQSPSY…DSEPNATPEA (243 aa)) the chain is on the cytoplasmic side. The segment at 505 to 718 (SPSYIVLGQL…AVLGSQVREA (214 aa)) is extended region for STAS domain. Positions 525–713 (AYEEVKEVPG…HSIHDAVLGS (189 aa)) constitute an STAS domain. A disordered region spans residues 718-741 (ALAEQEATAAPPQEDSEPNATPEA). The segment covering 721–730 (EQEATAAPPQ) has biased composition (low complexity).

The protein belongs to the SLC26A/SulP transporter (TC 2.A.53) family. In terms of assembly, homodimer. Interacts (via STAS domain) with CALM; this interaction is calcium-dependent and the STAS domain interacts with only one lobe of CALM which is an elongated conformation.

It is found in the cell membrane. It catalyses the reaction 2 hydrogencarbonate(in) + chloride(out) = 2 hydrogencarbonate(out) + chloride(in). In terms of biological role, voltage-sensitive motor protein that drives outer hair cell (OHC) electromotility (eM) and participates in sound amplification in the hearing organ. Converts changes in the transmembrane electric potential into mechanical displacements resulting in the coupling of its expansion to movement of a charged voltage sensor across the lipid membrane. The nature of the voltage sensor is not completely clear, and two models compete. In the first model, acts as an incomplete transporter where intracellular chloride anion acts as extrinsic voltage sensor that drives conformational change in the protein which is sufficient to produce a length change in the plane of the membrane and hence in the length of the OHC. The second model in which multiple charged amino acid residues are distributed at the intracellular and extracellular membrane interfaces that form an intrinsic voltage sensor, whose movement produces the non-linear capacitance (NLC). However, the effective voltage sensor may be the result of a hybrid voltage sensor assembled from intrinsic charge (charged residues) and extrinsic charge (bound anion). Notably, binding of anions to the anion-binding pocket partially neutralizes the intrinsic positive charge rather than to form an electrically negative sensor, therefore remaining charge may serve as voltage sensor that, after depolarization, moves from down (expanded state) to up (contracted) conformation, which is accompanied by an eccentric contraction of the intermembrane cross-sectional area of the protein as well as a major increase in the hydrophobic thickness of the protein having as consequences the plasma membrane thickening and the cell contraction after membrane depolarization. The anion-binding pocket transits from the inward-open (Down) state, where it is exposed toward the intracellular solvent in the absence of anion, to the occluded (Up) state upon anion binding. Salicylate competes for the anion-binding site and inhibits the voltage-sensor movement, and therefore inhibits the charge transfer and electromotility by displacing Cl(-) from the anion-binding site and by preventing the structural transitions to the contracted state. In addition, can act as a weak Cl(-)/HCO3 (-) antiporter across the cell membrane and so regulate the intracellular pH of the outer hair cells (OHCs), while firstly found as being unable to mediate electrogenic anion transport. Moreover, supports a role in cardiac mechanical amplification serving as an elastic element to enhance the actomyosin- based sarcomere contraction system. This chain is Prestin, found in Tursiops truncatus (Atlantic bottle-nosed dolphin).